Reading from the N-terminus, the 268-residue chain is Putative esterase/lipase 2 (268 aa).

His-29 is a catalytic residue. Ser-98 functions as the Charge relay system in the catalytic mechanism.

The protein belongs to the lipase/esterase LIP3/BchO family.

The polypeptide is Putative esterase/lipase 2 (Mycoplasma genitalium (strain ATCC 33530 / DSM 19775 / NCTC 10195 / G37) (Mycoplasmoides genitalium)).